The chain runs to 61 residues: Temporin-1Tb (61 aa).

Residues 1-22 form the signal peptide; the sequence is MFTLKKSLLLLFFLGTINLSLC. Residues 23 to 44 constitute a propeptide that is removed on maturation; the sequence is EEERNAEEERRDEPDERDVQVE. A Leucine amide modification is found at Leu59.

It belongs to the frog skin active peptide (FSAP) family. Temporin subfamily. As to quaternary structure, homo-oligomerizes in membranes as homodimers, homotrimers, or even homotetramers. Oligomerizes in presence of LPS. In Gram-positive bacterial mimetic membranes, the aggregation is weakly pronounced, and penetration proceeds more rapidly and is deeper than in Gram-negative bacterial mimetic membranes where aggregation is high. Homo-oligomerization is prevented by temporin-L. Expressed by the skin glands.

It localises to the secreted. The protein localises to the target cell membrane. The protein resides in the target cell. Its subcellular location is the target cell cytoplasm. Functionally, amphipathic alpha-helical antimicrobial peptide with potent activity against Gram-positive bacteria, weak activity against Gram-negative bacteria, and moderate activity against fungi. Mainly acts by causing membrane permeabilization, but is unable to forme pore-like openings. Is also able to penetrate eukaryotic cells (keratinocytes), and kill intracellular S.aureus (both wild-type and MRSA) without injuring host cells. Shows inhibitory effect on biofilm formation of Gram-positive bacteria, but not of Gram-negative bacteria. Shows antiviral activity against herpes simplex virus 1 (HSV-1) by disrupting the viral envelope. Also displays anti-leishmania activity by damaging parasite membrane. Does not show hemolytic activity. Acts synergistically with temporin-L that improves temporin-1Tb activity by preventing its self-association in lipopolysaccharides (LPS). In vitro, promotes cell migration and wound healing. The protein is Temporin-1Tb of Rana temporaria (European common frog).